The primary structure comprises 883 residues: DNA mismatch repair protein MutS (883 aa).

633 to 640 (GPNMGGKS) is an ATP binding site.

The protein belongs to the DNA mismatch repair MutS family.

Its function is as follows. This protein is involved in the repair of mismatches in DNA. It is possible that it carries out the mismatch recognition step. This protein has a weak ATPase activity. The protein is DNA mismatch repair protein MutS of Bordetella pertussis (strain Tohama I / ATCC BAA-589 / NCTC 13251).